Consider the following 563-residue polypeptide: Membrane protein insertase YidC (563 aa).

A helical transmembrane segment spans residues 6–26 (TVLWMIFSFSLLLLWNNWQIH). The segment at 36–70 (PAPEAAATQQPKADANGTAASSTASIPSSPAAAPA) is disordered. Low complexity predominate over residues 54 to 70 (AASSTASIPSSPAAAPA). The next 4 membrane-spanning stretches (helical) occupy residues 373 to 393 (WGWTIVALTVIIKAVFFPLAA), 443 to 463 (LPMVVQIPVFIALYWVLLASV), 482 to 502 (PFFILPAIMMATMFLQIKLNP), and 512 to 532 (VMMIMPLVFGGMMFFFPAGLV).

It belongs to the OXA1/ALB3/YidC family. Type 1 subfamily. As to quaternary structure, interacts with the Sec translocase complex via SecD. Specifically interacts with transmembrane segments of nascent integral membrane proteins during membrane integration.

The protein resides in the cell membrane. Its function is as follows. Required for the insertion and/or proper folding and/or complex formation of integral membrane proteins into the membrane. Involved in integration of membrane proteins that insert both dependently and independently of the Sec translocase complex, as well as at least some lipoproteins. Aids folding of multispanning membrane proteins. In Bordetella bronchiseptica (strain ATCC BAA-588 / NCTC 13252 / RB50) (Alcaligenes bronchisepticus), this protein is Membrane protein insertase YidC.